The following is a 201-amino-acid chain: Ras-related protein Rab-9B (201 aa).

GTP contacts are provided by valine 18, glycine 19, lysine 20, serine 21, serine 22, aspartate 33, serine 34, alanine 36, histidine 38, and threonine 39. Position 21 (serine 21) interacts with Mg(2+). Positions lysine 31–valine 42 match the Switch 1 motif. At serine 34 the chain carries Phosphoserine. The Mg(2+) site is built by threonine 39 and aspartate 62. Residues alanine 64–arginine 78 carry the Switch 2 motif. 5 residues coordinate GTP: glycine 65, asparagine 124, lysine 125, alanine 155, and lysine 156. 2 S-geranylgeranyl cysteine lipidation sites follow: cysteine 200 and cysteine 201.

This sequence belongs to the small GTPase superfamily. Rab family. Interacts (GTP-bound form) with SGSM1; the GDP-bound form has much lower affinity for SGSM1. The GTP-bound form but not the GDP-bound form interacts with HPS4 and the BLOC-3 complex (heterodimer of HPS1 and HPS4) but does not interact with HPS1 alone. Interacts (GTP-bound form) with NDE1. Mg(2+) serves as cofactor. As to expression, ubiquitous.

The protein resides in the cell membrane. It is found in the cytoplasmic vesicle. It localises to the phagosome. Its subcellular location is the phagosome membrane. The enzyme catalyses GTP + H2O = GDP + phosphate + H(+). Regulated by guanine nucleotide exchange factors (GEFs) which promote the exchange of bound GDP for free GTP. Regulated by GTPase activating proteins (GAPs) which increase the GTP hydrolysis activity. Inhibited by GDP dissociation inhibitors (GDIs). The small GTPases Rab are key regulators of intracellular membrane trafficking, from the formation of transport vesicles to their fusion with membranes. Rabs cycle between an inactive GDP-bound form and an active GTP-bound form that is able to recruit to membranes different sets of downstream effectors directly responsible for vesicle formation, movement, tethering and fusion. RAB9B is involved in the transport of proteins between the endosomes and the trans Golgi network. May use NDE1/NDEL1 as an effector to interact with the dynein motor complex in order to control retrograde trafficking of RAB9-associated late endosomes to the TGN. In Homo sapiens (Human), this protein is Ras-related protein Rab-9B.